The sequence spans 342 residues: Tetraacyldisaccharide 4'-kinase (342 aa).

68–75 (TVGGTGKT) contributes to the ATP binding site.

This sequence belongs to the LpxK family.

It carries out the reaction a lipid A disaccharide + ATP = a lipid IVA + ADP + H(+). It participates in glycolipid biosynthesis; lipid IV(A) biosynthesis; lipid IV(A) from (3R)-3-hydroxytetradecanoyl-[acyl-carrier-protein] and UDP-N-acetyl-alpha-D-glucosamine: step 6/6. Transfers the gamma-phosphate of ATP to the 4'-position of a tetraacyldisaccharide 1-phosphate intermediate (termed DS-1-P) to form tetraacyldisaccharide 1,4'-bis-phosphate (lipid IVA). This Burkholderia ambifaria (strain MC40-6) protein is Tetraacyldisaccharide 4'-kinase.